Reading from the N-terminus, the 333-residue chain is Transcription initiation factor IIB (333 aa).

Residues 33–64 form a TFIIB-type zinc finger; that stretch reads EIYRCPICGNDRFVYNYERGEVVCIVCGAVVQ. Zn(2+) contacts are provided by C37, C40, C56, and C59. 2 tandem repeats follow at residues 149-232 and 243-324.

It belongs to the TFIIB family.

Its function is as follows. Stabilizes TBP binding to an archaeal box-A promoter. Also responsible for recruiting RNA polymerase II to the pre-initiation complex (DNA-TBP-TFIIB). This is Transcription initiation factor IIB from Pyrobaculum arsenaticum (strain DSM 13514 / JCM 11321 / PZ6).